Consider the following 170-residue polypeptide: Peptide deformylase 2 (170 aa).

Fe cation-binding residues include Cys94 and His136. The active site involves Glu137. His140 contacts Fe cation.

The protein belongs to the polypeptide deformylase family. Requires Fe(2+) as cofactor.

The enzyme catalyses N-terminal N-formyl-L-methionyl-[peptide] + H2O = N-terminal L-methionyl-[peptide] + formate. Removes the formyl group from the N-terminal Met of newly synthesized proteins. Requires at least a dipeptide for an efficient rate of reaction. N-terminal L-methionine is a prerequisite for activity but the enzyme has broad specificity at other positions. This is Peptide deformylase 2 from Xanthomonas campestris pv. campestris (strain ATCC 33913 / DSM 3586 / NCPPB 528 / LMG 568 / P 25).